Here is a 175-residue protein sequence, read N- to C-terminus: Alkyl hydroperoxide reductase AhpD (175 aa).

C131 acts as the Proton donor in catalysis. Cysteines 131 and 134 form a disulfide. The active-site Cysteine sulfenic acid (-SOH) intermediate is the C134.

The protein belongs to the AhpD family.

It catalyses the reaction N(6)-[(R)-dihydrolipoyl]-L-lysyl-[lipoyl-carrier protein] + a hydroperoxide = N(6)-[(R)-lipoyl]-L-lysyl-[lipoyl-carrier protein] + an alcohol + H2O. Antioxidant protein with alkyl hydroperoxidase activity. Required for the reduction of the AhpC active site cysteine residues and for the regeneration of the AhpC enzyme activity. This chain is Alkyl hydroperoxide reductase AhpD, found in Brucella canis (strain ATCC 23365 / NCTC 10854 / RM-666).